We begin with the raw amino-acid sequence, 411 residues long: 3-phosphoshikimate 1-carboxyvinyltransferase (411 aa).

Residues Lys-20, Ser-21, and Arg-25 each contribute to the 3-phosphoshikimate site. Phosphoenolpyruvate is bound at residue Lys-20. 2 residues coordinate phosphoenolpyruvate: Gly-86 and Arg-114. 6 residues coordinate 3-phosphoshikimate: Ser-156, Ser-157, Gln-158, Ser-181, Asp-295, and Lys-322. Gln-158 is a phosphoenolpyruvate binding site. Residue Asp-295 is the Proton acceptor of the active site. Residues Arg-326, Arg-367, and Lys-393 each coordinate phosphoenolpyruvate.

Belongs to the EPSP synthase family. As to quaternary structure, monomer.

It localises to the cytoplasm. It catalyses the reaction 3-phosphoshikimate + phosphoenolpyruvate = 5-O-(1-carboxyvinyl)-3-phosphoshikimate + phosphate. It participates in metabolic intermediate biosynthesis; chorismate biosynthesis. In terms of biological role, catalyzes the transfer of the enolpyruvyl moiety of phosphoenolpyruvate (PEP) to the 5-hydroxyl of shikimate-3-phosphate (S3P) to produce enolpyruvyl shikimate-3-phosphate and inorganic phosphate. In Picrophilus torridus (strain ATCC 700027 / DSM 9790 / JCM 10055 / NBRC 100828 / KAW 2/3), this protein is 3-phosphoshikimate 1-carboxyvinyltransferase.